Reading from the N-terminus, the 314-residue chain is Malate dehydrogenase (314 aa).

NAD(+) contacts are provided by residues 11 to 16 (GSGNIG) and Asp-35. 2 residues coordinate substrate: Arg-84 and Arg-90. Residues Asn-97 and 120-122 (ITN) contribute to the NAD(+) site. The substrate site is built by Asn-122 and Arg-153. The active-site Proton acceptor is His-177.

It belongs to the LDH/MDH superfamily. MDH type 3 family.

It carries out the reaction (S)-malate + NAD(+) = oxaloacetate + NADH + H(+). In terms of biological role, catalyzes the reversible oxidation of malate to oxaloacetate. The sequence is that of Malate dehydrogenase from Rickettsia bellii (strain OSU 85-389).